The following is a 201-amino-acid chain: Small ribosomal subunit protein uS4 (201 aa).

Positions 91–154 (SRLDNVIYRA…QKMEWFEEAQ (64 aa)) constitute an S4 RNA-binding domain.

The protein belongs to the universal ribosomal protein uS4 family. As to quaternary structure, part of the 30S ribosomal subunit. Contacts protein S5. The interaction surface between S4 and S5 is involved in control of translational fidelity.

One of the primary rRNA binding proteins, it binds directly to 16S rRNA where it nucleates assembly of the body of the 30S subunit. In terms of biological role, with S5 and S12 plays an important role in translational accuracy. The chain is Small ribosomal subunit protein uS4 from Corynebacterium aurimucosum (strain ATCC 700975 / DSM 44827 / CIP 107346 / CN-1) (Corynebacterium nigricans).